A 383-amino-acid chain; its full sequence is Probable arabinan endo-1,5-alpha-L-arabinosidase D (383 aa).

Residues 1 to 22 form the signal peptide; sequence MVHITLPGLLLCLCLYLSVAPA. The Proton acceptor role is filled by aspartate 49. Asparagine 75, asparagine 163, and asparagine 206 each carry an N-linked (GlcNAc...) asparagine glycan. The Proton donor role is filled by glutamate 227. An N-linked (GlcNAc...) asparagine glycan is attached at asparagine 325. A lipid anchor (GPI-anchor amidated asparagine) is attached at asparagine 356. The propeptide at 357-383 is removed in mature form; the sequence is PGNSLQPPSSVSLQIVAFLCLVILFTL.

It belongs to the glycosyl hydrolase 43 family.

The protein localises to the cell membrane. The catalysed reaction is Endohydrolysis of (1-&gt;5)-alpha-arabinofuranosidic linkages in (1-&gt;5)-arabinans.. It participates in glycan metabolism; L-arabinan degradation. Endo-1,5-alpha-L-arabinanase involved in degradation of pectin. Its preferred substrate is linear 1,5-alpha-L-arabinan. This Emericella nidulans (strain FGSC A4 / ATCC 38163 / CBS 112.46 / NRRL 194 / M139) (Aspergillus nidulans) protein is Probable arabinan endo-1,5-alpha-L-arabinosidase D (abnD).